The chain runs to 363 residues: Pyrimidine monooxygenase RutA (363 aa).

FMN is bound by residues 49–50, asparagine 115, glutamate 124, 140–141, and serine 190; these read IK and RY.

Belongs to the NtaA/SnaA/DszA monooxygenase family. RutA subfamily.

It carries out the reaction uracil + FMNH2 + NADH + O2 = (Z)-3-ureidoacrylate + FMN + NAD(+) + H2O + H(+). The catalysed reaction is thymine + FMNH2 + NADH + O2 = (Z)-2-methylureidoacrylate + FMN + NAD(+) + H2O + H(+). Functionally, catalyzes the pyrimidine ring opening between N-3 and C-4 by an unusual flavin hydroperoxide-catalyzed mechanism, adding oxygen atoms in the process to yield ureidoacrylate peracid, that immediately reacts with FMN forming ureidoacrylate and FMN-N(5)-oxide. The FMN-N(5)-oxide reacts spontaneously with NADH to produce FMN. Requires the flavin reductase RutF to regenerate FMN in vivo. The polypeptide is Pyrimidine monooxygenase RutA (Klebsiella variicola (strain At-22)).